A 225-amino-acid polypeptide reads, in one-letter code: MQCLLLLPFLLLGTVSALHLENDAPHLESLETQADLGQDLDSSKEQERDLALTEEVIQAEGEEVKASACQDNFEDEEAMESDPAALDKDFQCPREEDIVEVQGSPRCKICRYLLVRTPKTFAEAQNVCSRCYGGNLVSIHDFNFNYRIQCCTSTVNQAQVWIGGNLRGWFLWKRFCWTDGSHWNFAYWSPGQPGNGQGSCVALCTKGGYWRRAQCDKQLPFVCSF.

Residues 1–17 (MQCLLLLPFLLLGTVSA) form the signal peptide. One can recognise a C-type lectin domain in the interval 107–224 (CKICRYLLVR…CDKQLPFVCS (118 aa)). Intrachain disulfides connect Cys128-Cys223 and Cys200-Cys215.

In terms of tissue distribution, expressed in bone marrow. Not detected in placenta.

The protein resides in the cytoplasmic granule. In terms of biological role, possesses similar cytotoxic and cytostimulatory activities to PRG2/MBP. In vitro, stimulates neutrophil superoxide production and IL8 release, and histamine and leukotriene C4 release from basophils. This chain is Proteoglycan 3, found in Homo sapiens (Human).